A 575-amino-acid polypeptide reads, in one-letter code: 2-isopropylmalate synthase (575 aa).

In terms of domain architecture, Pyruvate carboxyltransferase spans 31-305; the sequence is PTWLSTDLRD…APGLDFSDIA (275 aa). Asp40, His244, His246, and Asn280 together coordinate Mg(2+). The segment at 437 to 575 is regulatory domain; the sequence is PVQASPDFSD…RFAGEEQGKG (139 aa).

This sequence belongs to the alpha-IPM synthase/homocitrate synthase family. LeuA type 2 subfamily. As to quaternary structure, homodimer. Mg(2+) serves as cofactor.

The protein localises to the cytoplasm. It catalyses the reaction 3-methyl-2-oxobutanoate + acetyl-CoA + H2O = (2S)-2-isopropylmalate + CoA + H(+). It participates in amino-acid biosynthesis; L-leucine biosynthesis; L-leucine from 3-methyl-2-oxobutanoate: step 1/4. Catalyzes the condensation of the acetyl group of acetyl-CoA with 3-methyl-2-oxobutanoate (2-ketoisovalerate) to form 3-carboxy-3-hydroxy-4-methylpentanoate (2-isopropylmalate). The protein is 2-isopropylmalate synthase of Herbaspirillum seropedicae (strain SmR1).